The chain runs to 149 residues: Hut operon positive regulatory protein (149 aa).

It belongs to the HutP family. Homohexamer.

Antiterminator that binds to cis-acting regulatory sequences on the mRNA in the presence of histidine, thereby suppressing transcription termination and activating the hut operon for histidine utilization. This is Hut operon positive regulatory protein from Geobacillus thermodenitrificans (strain NG80-2).